A 652-amino-acid chain; its full sequence is Acetyl-coenzyme A synthetase (652 aa).

CoA is bound by residues 189-192 (RGGK), Thr311, and Asn335. ATP-binding positions include 387–389 (GEP), 411–416 (DTWWQT), Asp500, and Arg515. Ser523 provides a ligand contact to CoA. Arg526 is an ATP binding site. The Mg(2+) site is built by Val537, His539, and Val542. A CoA-binding site is contributed by Arg584. Lys609 is modified (N6-acetyllysine).

The protein belongs to the ATP-dependent AMP-binding enzyme family. Requires Mg(2+) as cofactor. In terms of processing, acetylated. Deacetylation by the SIR2-homolog deacetylase activates the enzyme.

It carries out the reaction acetate + ATP + CoA = acetyl-CoA + AMP + diphosphate. In terms of biological role, catalyzes the conversion of acetate into acetyl-CoA (AcCoA), an essential intermediate at the junction of anabolic and catabolic pathways. AcsA undergoes a two-step reaction. In the first half reaction, AcsA combines acetate with ATP to form acetyl-adenylate (AcAMP) intermediate. In the second half reaction, it can then transfer the acetyl group from AcAMP to the sulfhydryl group of CoA, forming the product AcCoA. In Rhizobium rhizogenes (strain K84 / ATCC BAA-868) (Agrobacterium radiobacter), this protein is Acetyl-coenzyme A synthetase.